The sequence spans 202 residues: CASP-like protein 2B1 (202 aa).

Residues 1-29 (MSYLGVGVSPGNVPVYHGTNLKVVDRRVR) lie on the Cytoplasmic side of the membrane. A helical transmembrane segment spans residues 30 to 50 (LAELVLRCVICGLGILAAVLV). Topologically, residues 51–72 (GTDTQVKVIFTIQKKAKFTDMK) are extracellular. A helical transmembrane segment spans residues 73–93 (ALVFLVIANGIAAAYSLIQGL). The Cytoplasmic segment spans residues 94–109 (RCVVSMVRGSVLFSKP). A helical transmembrane segment spans residues 110 to 130 (LAWAIFSGDQVIAYLTLAAVA). Topologically, residues 131 to 164 (AAAQSSVFGEFGQPELQWMKICNMYGKFCNQVGE) are extracellular. Residues 165–185 (GIVSAVGVSLSMVILSGISAF) form a helical membrane-spanning segment. Over 186-202 (SLFRLYGGNKGTSGGRW) the chain is Cytoplasmic.

It belongs to the Casparian strip membrane proteins (CASP) family. In terms of assembly, homodimer and heterodimers.

It is found in the cell membrane. The sequence is that of CASP-like protein 2B1 from Vitis vinifera (Grape).